The primary structure comprises 255 residues: MKQFTISIEELLFCFYSEGFFEQGMALKQAYFPEIEDEQLGALFEAACRSLLAKDAAEYRNHQYRLKDEYCPFIHVLNDADYTVKLSKFNGQGAEQNVSCHVSKFGTYSHELLFDEQVHRITKMESSEGLLAKTDEFLHIIDTEDKRESIVTLTSNEFEKLLEGASDNPSYLKEFLEKHDHQEDVTRFANDLALRKGKMDTLMRLAYGKDNTPEVADMAFVLPGAHHTWLVTGITQNEFSILPAHKDVVNQIISK.

This is an uncharacterized protein from Bacillus subtilis (strain 168).